The primary structure comprises 405 residues: uncharacterized protein (405 aa).

The next 12 membrane-spanning stretches (helical) occupy residues 19–39, 47–67, 85–105, 107–127, 156–176, 178–198, 224–244, 252–272, 283–303, 309–329, 344–364, and 366–386; these read IVSIVMFNFASYLTIGLPLAV, VMGFSAFWAGLVISLQYFATL, IVVFGLCGCFLSGLGYLTAGL, ASLPVISLLLLCLGRVILGIG, GIVTYGAMAMGAPLGVVFYHW, GLQALALIIMGVALVAILLAI, GMALALASAGFGVIATFITLF, GAAFALTLFSCAFVGTRLLFP, VAMICFSVEIIGLLLVGVATM, IGVLLAGAGFSLVFPALGVVA, TYTVFMDLSLGVTGPLAGLVM, and WAGVPVIYLAAAGLVAIALLL.

This sequence belongs to the major facilitator superfamily. YhhS family.

Its subcellular location is the cell inner membrane. This is an uncharacterized protein from Shigella flexneri.